A 606-amino-acid chain; its full sequence is MRVFPTYIAVSGLFGGAFAAFGATNIKGQTKLFGTSFGILAKNASYDYVIVGGGTAGLTVAARLAAQPNVSVAVIEAGSFYEIDNGNISQVPGYGANYLSFNDLTPSPVLVDWGLITEPQDGLNNRQIHYSAGKTLGGSSALNDMIFHRATKGSYQRWAELVDDDTYTWDKLLPYLKKSVDFTKPKDAATYPYDASVYSPEGGPLQVSFPNYRAPCDDFMETAFTKSGLKPIKGLNSGHLDGFAPTTFVINPADQTRSSSEAAFLQEALDTTAMTLYLRTLAKKILFDTNKTANGVLVETNGAEYTISAKKEVILSAGVFHSPQLLLLSGIGQADSLEKFGIPVISDLAGVGQNLWDHLFIFTSHEMNITTNSGVLVDPELLAEAVESYLNQQTGPLTGIGGGVVGWEKLPNRVSFSNSTNETLASFPDDFPEVEYVALAPGSNPASDPLANHFASVTAAVQSTSSRGYVKLRSADPHDAPIININALSHPADADLAVGAIKRLRQIAEATGVRVKEVLPGPEVVSDAEILEWVRNNAVNGYHASSTCAMGNSSNPDAVVDTRAKVYGVSNLRVVDASALPYLPPGHPMSSIYAFAELIAEDILSK.

The signal sequence occupies residues M1–A19. N-linked (GlcNAc...) asparagine glycosylation is found at N43, N69, N87, N290, N368, N418, N421, and N552.

The protein belongs to the GMC oxidoreductase family.

The catalysed reaction is terremutin + A = terreate + AH2. The protein operates within secondary metabolite biosynthesis. Functionally, glucose methanol choline oxidoreductase; part of the gene cluster that mediates the biosynthesis of terreic acid, a quinone epoxide inhibitor of Bruton's tyrosine kinase. The first step of the pathway is the synthesis of 6-methylsalicylic acid (6-MSA) by the 6-methylsalicylic acid synthase atX. In the biosynthesis of 6-MSA, atX utilizes one acetyl-CoA and three malonyl-CoAs as its substrates and catalyzes a series of programmed reactions including Claisen condensation, reduction, aldol cyclization, and the hydrolytic cleavage that yields 6-MSA. The 6-methylsalicylate 1-monooxygenase atA then catalyzes the decarboxylative hydroxylation of 6-MSA to 3-methylcatechol. The next step is the conversion of 3-methylcatechol to 3-methyl-1,2,4-benzenetriol by cytochrome P450 monooxygenase atE, which is enhanced by cytochrome P450 monooxygenase atG. Then, the epoxidase atD catalyzes the epoxidation and hydroxyl oxidation of 3-methyl-1,2,4-benzenetriol to terremutin. Lastly, GMC oxidoreductase atC oxidizes terremutin to terreic acid. This is Glucose methanol choline oxidoreductase atC from Aspergillus terreus (strain NIH 2624 / FGSC A1156).